Here is a 307-residue protein sequence, read N- to C-terminus: Ribonuclease Z (307 aa).

The Zn(2+) site is built by His-61, His-63, Asp-65, His-66, His-138, Asp-208, and His-264. The active-site Proton acceptor is Asp-65.

The protein belongs to the RNase Z family. Homodimer. Zn(2+) serves as cofactor.

The catalysed reaction is Endonucleolytic cleavage of RNA, removing extra 3' nucleotides from tRNA precursor, generating 3' termini of tRNAs. A 3'-hydroxy group is left at the tRNA terminus and a 5'-phosphoryl group is left at the trailer molecule.. Functionally, zinc phosphodiesterase, which displays some tRNA 3'-processing endonuclease activity. Probably involved in tRNA maturation, by removing a 3'-trailer from precursor tRNA. The sequence is that of Ribonuclease Z from Pyrococcus horikoshii (strain ATCC 700860 / DSM 12428 / JCM 9974 / NBRC 100139 / OT-3).